The primary structure comprises 296 residues: Ribose import binding protein RbsB (296 aa).

The first 25 residues, 1-25, serve as a signal peptide directing secretion; sequence MNMKKLATLVSAVALSATVSANAMA.

The protein belongs to the bacterial solute-binding protein 2 family. In terms of assembly, the complex is composed of an ATP-binding protein (RbsA), two transmembrane proteins (RbsC) and a solute-binding protein (RbsB).

It is found in the periplasm. In terms of biological role, part of the ABC transporter complex RbsABC involved in ribose import. Binds ribose. The polypeptide is Ribose import binding protein RbsB (rbsB) (Salmonella typhi).